The following is a 231-amino-acid chain: Sensory transduction protein BceR (231 aa).

The Response regulatory domain occupies 3–116 (KLLLIEDDES…VLIAKIQAMF (114 aa)). The residue at position 52 (Asp52) is a 4-aspartylphosphate. Residues 127–225 (STIKTWCGAA…KVGQGYIAKE (99 aa)) constitute a DNA-binding region (ompR/PhoB-type).

Phosphorylated by BceS.

The protein resides in the cytoplasm. Its function is as follows. Member of the two-component regulatory system BceS/BceR involved in the regulation of bacitracin resistance. When activated by BceS, binds to the upstream region of the bceAB promoter and up-regulates the expression of these two genes. The chain is Sensory transduction protein BceR (bceR) from Bacillus subtilis (strain 168).